A 95-amino-acid polypeptide reads, in one-letter code: Co-chaperonin GroES (95 aa).

Belongs to the GroES chaperonin family. As to quaternary structure, heptamer of 7 subunits arranged in a ring. Interacts with the chaperonin GroEL.

It localises to the cytoplasm. Its function is as follows. Together with the chaperonin GroEL, plays an essential role in assisting protein folding. The GroEL-GroES system forms a nano-cage that allows encapsulation of the non-native substrate proteins and provides a physical environment optimized to promote and accelerate protein folding. GroES binds to the apical surface of the GroEL ring, thereby capping the opening of the GroEL channel. This is Co-chaperonin GroES from Pelodictyon phaeoclathratiforme (strain DSM 5477 / BU-1).